We begin with the raw amino-acid sequence, 271 residues long: Type III pantothenate kinase (271 aa).

ATP is bound at residue 6–13 (DVRNTHTV). Position 109-112 (109-112 (GADR)) interacts with substrate. The active-site Proton acceptor is the aspartate 111. Aspartate 131 contacts K(+). An ATP-binding site is contributed by serine 134. Threonine 186 serves as a coordination point for substrate.

Belongs to the type III pantothenate kinase family. As to quaternary structure, homodimer. The cofactor is NH4(+). It depends on K(+) as a cofactor.

The protein resides in the cytoplasm. The catalysed reaction is (R)-pantothenate + ATP = (R)-4'-phosphopantothenate + ADP + H(+). It functions in the pathway cofactor biosynthesis; coenzyme A biosynthesis; CoA from (R)-pantothenate: step 1/5. Functionally, catalyzes the phosphorylation of pantothenate (Pan), the first step in CoA biosynthesis. This chain is Type III pantothenate kinase, found in Mycobacterium avium (strain 104).